The primary structure comprises 431 residues: Trigger factor (431 aa).

The PPIase FKBP-type domain occupies threonine 165–proline 250.

The protein belongs to the FKBP-type PPIase family. Tig subfamily.

It is found in the cytoplasm. The enzyme catalyses [protein]-peptidylproline (omega=180) = [protein]-peptidylproline (omega=0). Functionally, involved in protein export. Acts as a chaperone by maintaining the newly synthesized protein in an open conformation. Functions as a peptidyl-prolyl cis-trans isomerase. This Aster yellows witches'-broom phytoplasma (strain AYWB) protein is Trigger factor.